The chain runs to 158 residues: S-ribosylhomocysteine lyase (158 aa).

Fe cation is bound by residues His54, His58, and Cys124.

This sequence belongs to the LuxS family. Homodimer. The cofactor is Fe cation.

The enzyme catalyses S-(5-deoxy-D-ribos-5-yl)-L-homocysteine = (S)-4,5-dihydroxypentane-2,3-dione + L-homocysteine. In terms of biological role, involved in the synthesis of autoinducer 2 (AI-2) which is secreted by bacteria and is used to communicate both the cell density and the metabolic potential of the environment. The regulation of gene expression in response to changes in cell density is called quorum sensing. Catalyzes the transformation of S-ribosylhomocysteine (RHC) to homocysteine (HC) and 4,5-dihydroxy-2,3-pentadione (DPD). This chain is S-ribosylhomocysteine lyase, found in Lactobacillus johnsonii (strain CNCM I-12250 / La1 / NCC 533).